A 385-amino-acid polypeptide reads, in one-letter code: Aryl-alcohol dehydrogenase [NADP(+)] (385 aa).

Tyr-76 serves as the catalytic Proton donor. An NADP(+)-binding site is contributed by 238 to 248 (NVLCAGKIRTD).

This sequence belongs to the aldo/keto reductase family. Aldo/keto reductase 2 subfamily. The N-terminus is blocked.

The catalysed reaction is an aromatic primary alcohol + NADP(+) = an aromatic aldehyde + NADPH + H(+). The polypeptide is Aryl-alcohol dehydrogenase [NADP(+)] (Phanerodontia chrysosporium (White-rot fungus)).